The sequence spans 489 residues: Actin-related protein 4 (489 aa).

A disordered region spans residues 323–379; it reads KRTKPSGVNKSDKKVTPTEEKEQEAVSKSTSPAANSADTPNETGKRPLEEEKPPKEN. Residues 332–347 are compositionally biased toward basic and acidic residues; it reads KSDKKVTPTEEKEQEA. Residues 348–364 are compositionally biased toward polar residues; the sequence is VSKSTSPAANSADTPNE. Ser-349 bears the Phosphoserine mark. Over residues 365–379 the composition is skewed to basic and acidic residues; that stretch reads TGKRPLEEEKPPKEN.

It belongs to the actin family. ARP4 subfamily. Component of the NuA4 histone acetyltransferase complex composed of at least ACT1, ARP4, EAF3, EAF5, EAF6, EAF7, EPL1, ESA1, SWC4, TRA1, VID21, YAF9 and YNG2. Component of the chromatin-remodeling INO80 complex, at least composed of ARP4, ARP5, ARP8, RVB1, RVB2, TAF14, NHP10, IES1, IES3, IES4, IES6, ACT1, IES2, IES5 and INO80. Component of the SWR1 chromatin remodeling complex composed of at least ACT1, ARP4, RVB1, RVB2, ARP6, YAF9, VPS71, VPS72, SWC3, SWC4, SWC5, SWC7 and SWR1, and perhaps BDF1. Interacts with histones H4 (HHF1 and HHF2), H3 (HHT1 and HHT2) and H2A (HTA1 and HTA2).

The protein localises to the nucleus. In terms of biological role, chromatin interaction component of the NuA4 histone acetyltransferase complex which is involved in transcriptional activation of selected genes principally by acetylation of nucleosomal histone H4 and H2A. The NuA4 complex is also involved in DNA repair. ARP4 recognizes H2AS128ph (gamma-H2A) and is required for NuA4 complex integrity. Component of the SWR1 complex which mediates the ATP-dependent exchange of histone H2A for the H2A variant HZT1 leading to transcriptional regulation of selected genes by chromatin remodeling. Component of the INO80 complex which remodels chromatin by shifting nucleosomes. Its ability to induce transcription of some phosphate-responsive genes is modulated by inositol polyphosphates. The INO80 complex is involved in DNA repair by associating to gamma-H2A as a response to DNA damage. The protein is Actin-related protein 4 (ARP4) of Saccharomyces cerevisiae (strain ATCC 204508 / S288c) (Baker's yeast).